The sequence spans 588 residues: Ankyrin repeat and SOCS box protein 15 (588 aa).

ANK repeat units follow at residues 75-104 (KGWF…KTLW), 110-139 (DGET…WPNT), 143-172 (KGET…SLDQ), 176-205 (KRWS…NVHL), 209-238 (FGVT…DVLA), 242-271 (DGAS…SGNI), 275-304 (AGHL…KHAI), 307-336 (SGLT…DVNS), 349-378 (ERKT…DPNL), 379-408 (DPLN…NVNC), and 416-444 (TRFP…QVEM). The 56-residue stretch at 524 to 579 (WPEIRQILENPCSLKHLCRLKIRRLMGLQRLCQPTLMEKLSLPPTIQRYILFKEYD) folds into the SOCS box domain.

The protein belongs to the ankyrin SOCS box (ASB) family.

It functions in the pathway protein modification; protein ubiquitination. May be a substrate-recognition component of a SCF-like ECS (Elongin-Cullin-SOCS-box protein) E3 ubiquitin-protein ligase complex which mediates the ubiquitination and subsequent proteasomal degradation of target proteins. This Bos taurus (Bovine) protein is Ankyrin repeat and SOCS box protein 15 (ASB15).